Here is an 889-residue protein sequence, read N- to C-terminus: Mitochondrial intermediate peptidase (889 aa).

Residues 1-30 (MASTSKNAQRAAASVAHSYHVCLARRMSRL) constitute a mitochondrion transit peptide. Residues 60 to 112 (SSSLAAQRVQRPTSAGPILTNPISDHEKDNDELRSLFDAPPTSSSANHLRSSG) form a disordered region. Residues 83–94 (SDHEKDNDELRS) show a composition bias toward basic and acidic residues. Residues 100 to 112 (PTSSSANHLRSSG) are compositionally biased toward polar residues. Histidine 670 is a Zn(2+) binding site. Glutamate 671 is a catalytic residue. Residues histidine 674 and histidine 677 each contribute to the Zn(2+) site.

It belongs to the peptidase M3 family. Zn(2+) serves as cofactor.

It is found in the mitochondrion matrix. The catalysed reaction is Release of an N-terminal octapeptide as second stage of processing of some proteins imported into the mitochondrion.. In terms of biological role, cleaves proteins, imported into the mitochondrion, to their mature size. While most mitochondrial precursor proteins are processed to the mature form in one step by mitochondrial processing peptidase (MPP), the sequential cleavage by MIP of an octapeptide after initial processing by MPP is a required step for a subgroup of nuclear-encoded precursor proteins destined for the matrix or the inner membrane. This is Mitochondrial intermediate peptidase (OCT1) from Mycosarcoma maydis (Corn smut fungus).